A 115-amino-acid chain; its full sequence is MITPPDVFKSLSDETRARATLLIASLGELCVCELMCALNDSQPKISRHLAQLRSNGMLLDRRQGQWVYYRLNPELPSWVHEMLQVTLQANSQWLADNALRLKNMDGRPVRDSVCC.

An HTH arsR-type domain is found at 1 to 90; the sequence is MITPPDVFKS…EMLQVTLQAN (90 aa). Positions 30 and 32 each coordinate arsenite. The segment at residues 31–54 is a DNA-binding region (H-T-H motif); it reads VCELMCALNDSQPKISRHLAQLRS.

As to quaternary structure, homodimer.

Its subcellular location is the cytoplasm. Binds arsenite and regulates the expression of arsenic efflux pumps. In vitro, also binds antimony and bismuth, but not arsenate. This chain is Arsenic resistance transcriptional regulator ArsR2, found in Pseudomonas putida (strain ATCC 47054 / DSM 6125 / CFBP 8728 / NCIMB 11950 / KT2440).